The chain runs to 308 residues: tRNA pseudouridine synthase B (308 aa).

The Nucleophile role is filled by Asp47.

This sequence belongs to the pseudouridine synthase TruB family. Type 1 subfamily.

The catalysed reaction is uridine(55) in tRNA = pseudouridine(55) in tRNA. Responsible for synthesis of pseudouridine from uracil-55 in the psi GC loop of transfer RNAs. In Rhodospirillum rubrum (strain ATCC 11170 / ATH 1.1.1 / DSM 467 / LMG 4362 / NCIMB 8255 / S1), this protein is tRNA pseudouridine synthase B.